The sequence spans 88 residues: Beta-insect excitatory toxin LqhIT1a (88 aa).

A signal peptide spans 1-18 (MKFFLLFLVVLPIMGVLG). An LCN-type CS-alpha/beta domain is found at 20–83 (KNGYAVDSKG…ISGTTKKYCD (64 aa)). 4 disulfides stabilise this stretch: cysteine 34–cysteine 55, cysteine 40–cysteine 60, cysteine 44–cysteine 62, and cysteine 56–cysteine 82.

The protein belongs to the long (4 C-C) scorpion toxin superfamily. Sodium channel inhibitor family. Beta subfamily. As to expression, expressed by the venom gland.

It localises to the secreted. Functionally, excitatory insect toxins induce a spastic paralysis. They bind voltage-independently at site-4 of sodium channels (Nav) and shift the voltage of activation toward more negative potentials thereby affecting sodium channel activation and promoting spontaneous and repetitive firing. The protein is Beta-insect excitatory toxin LqhIT1a of Leiurus hebraeus (Hebrew deathstalker scorpion).